Consider the following 340-residue polypeptide: Guanine nucleotide-binding protein G(I)/G(S)/G(T) subunit beta-3 (340 aa).

WD repeat units lie at residues 53 to 83 (GHLA…IVWD), 95 to 125 (LRSS…SIYS), 141 to 170 (AHTG…ALWD), 182 to 212 (GHTG…KLWD), 224 to 254 (GHES…RLFD), 268 to 298 (SIIC…NVWD), and 310 to 340 (GHDN…KIWN).

Belongs to the WD repeat G protein beta family. G proteins are composed of 3 units, alpha, beta and gamma. Interacts with RASD2. In terms of tissue distribution, expressed at a high level in the heart and at a much lower level in the brain.

Its function is as follows. Guanine nucleotide-binding proteins (G proteins) are involved as a modulator or transducer in various transmembrane signaling systems. The beta and gamma chains are required for the GTPase activity, for replacement of GDP by GTP, and for G protein-effector interaction. The chain is Guanine nucleotide-binding protein G(I)/G(S)/G(T) subunit beta-3 (Gnb3) from Rattus norvegicus (Rat).